A 247-amino-acid polypeptide reads, in one-letter code: Carboxy-S-adenosyl-L-methionine synthase (247 aa).

S-adenosyl-L-methionine is bound by residues tyrosine 40, 65-67 (GAS), 90-91 (DN), 122-123 (DI), asparagine 137, and arginine 204.

Belongs to the class I-like SAM-binding methyltransferase superfamily. Cx-SAM synthase family. Homodimer.

The catalysed reaction is prephenate + S-adenosyl-L-methionine = carboxy-S-adenosyl-L-methionine + 3-phenylpyruvate + H2O. Functionally, catalyzes the conversion of S-adenosyl-L-methionine (SAM) to carboxy-S-adenosyl-L-methionine (Cx-SAM). The polypeptide is Carboxy-S-adenosyl-L-methionine synthase (Pseudomonas putida (strain W619)).